The sequence spans 351 residues: MTQQNFVELKNVTKRFGNNTVIDNLELSIPQGHMVTLLGPSGCGKTTVLRLVAGLEKPSAGKIFIDGEDVTDRSIQQRDICMVFQSYALFPHMSLGENIGYGLKMLGQPKAEIRERVKEALELVDLGGFEDRYVDQISGGQQQRVALARALILKPKVLLFDEPLSNLDANLRRSMREKIRELQQQFNITSLYVTHDQSEAFAVSDAVLVMNKGKIMQIGTPQTLYRQPASEFMASFMGDANIFPATLATDYVEIFQYRLPRPANFTTNRQSVTVGVRPEAITLSRNGNISQRCTISHVAYMGPQYEVTVDWQGQTLLLQINATQLQPDVGDNYYLEIHPFGMFILTEKNSG.

The 231-residue stretch at 7–237 (VELKNVTKRF…PASEFMASFM (231 aa)) folds into the ABC transporter domain. 39-46 (GPSGCGKT) is a binding site for ATP.

The protein belongs to the ABC transporter superfamily. Fe(3+) ion importer (TC 3.A.1.10) family. The complex is composed of two ATP-binding proteins (FbpC), two transmembrane proteins (FbpB) and a solute-binding protein (FbpA).

It is found in the cell inner membrane. The catalysed reaction is Fe(3+)(out) + ATP + H2O = Fe(3+)(in) + ADP + phosphate + H(+). Its function is as follows. Part of the ABC transporter complex FbpABC involved in Fe(3+) ions import. Responsible for energy coupling to the transport system. The sequence is that of Fe(3+) ions import ATP-binding protein FbpC from Photorhabdus laumondii subsp. laumondii (strain DSM 15139 / CIP 105565 / TT01) (Photorhabdus luminescens subsp. laumondii).